The primary structure comprises 1700 residues: Probable serine/threonine-protein kinase ifkC (1700 aa).

Positions 1–25 are disordered; it reads MPPKPKQKAKQPSQQPPPPPPPAAA. Residues 14 to 23 show a composition bias toward pro residues; that stretch reads QQPPPPPPPA. Residues 74 to 197 enclose the RWD domain; that stretch reads MELEALQAIF…EIAKDFLNEN (124 aa). The span at 454–463 shows a compositional bias: polar residues; that stretch reads GLKKSPSTFE. The tract at residues 454 to 488 is disordered; sequence GLKKSPSTFEYSGEGGGGGVGGGSSQKTINPHQQS. Positions 466–477 are enriched in gly residues; it reads GEGGGGGVGGGS. Polar residues predominate over residues 479 to 488; it reads QKTINPHQQS. The Protein kinase domain maps to 494–1027; it reads FEEIQLLGRG…AQQLLQSELM (534 aa). ATP contacts are provided by residues 500-508 and lysine 523; that span reads LGRGGFGQV. Disordered stretches follow at residues 568–639 and 689–760; these read LTND…ENND and GNNT…SSSK. Acidic residues predominate over residues 572-639; that stretch reads NSDDDDDDDD…SEFESEENND (68 aa). Low complexity predominate over residues 697–735; it reads SSNQHLQQQQQQNQSQQQKKQPQQNQSQQQKKLKNSNSK. Residues 736–752 are compositionally biased toward basic residues; it reads SKSKSKSKSKSKSKSNS. Aspartate 822 acts as the Proton acceptor in catalysis. Composition is skewed to low complexity over residues 850-875, 1135-1158, 1230-1240, and 1509-1531; these read TSTL…SSNS, NNSS…NTNS, SSNGNSNNNNS, and NNSN…SYNN. 4 disordered regions span residues 850–901, 1134–1160, 1216–1253, and 1507–1531; these read TSTL…EVEG, FNNS…NSVV, KHHH…SNTT, and NLNN…SYNN.

The protein belongs to the protein kinase superfamily. Ser/Thr protein kinase family. GCN2 subfamily.

The enzyme catalyses L-seryl-[protein] + ATP = O-phospho-L-seryl-[protein] + ADP + H(+). It catalyses the reaction L-threonyl-[protein] + ATP = O-phospho-L-threonyl-[protein] + ADP + H(+). This Dictyostelium discoideum (Social amoeba) protein is Probable serine/threonine-protein kinase ifkC (ifkC).